An 86-amino-acid polypeptide reads, in one-letter code: Putative defensin-like protein 234 (86 aa).

Residues 1–26 (MRSATLLLVSCVLLSFILGNVKEVEA) form the signal peptide. 4 disulfides stabilise this stretch: Cys34-Cys86, Cys44-Cys71, Cys52-Cys80, and Cys69-Cys82.

Belongs to the DEFL family.

Its subcellular location is the secreted. This Arabidopsis thaliana (Mouse-ear cress) protein is Putative defensin-like protein 234 (SCRL14).